Here is a 320-residue protein sequence, read N- to C-terminus: Adhesin MafA 1 (320 aa).

The N-terminal stretch at 1–18 is a signal peptide; it reads MQARLLIPILFSVFILSA. A lipid anchor (N-palmitoyl cysteine) is attached at cysteine 19. A lipid anchor (S-diacylglycerol cysteine) is attached at cysteine 19. The disordered stretch occupies residues 288 to 320; the sequence is HMGNSAPSVEADNSHEGYGYSDEAVRRHRQGQP.

Belongs to the MafA family.

Its subcellular location is the cell outer membrane. This is Adhesin MafA 1 (mafA1) from Neisseria meningitidis serogroup A / serotype 4A (strain DSM 15465 / Z2491).